The primary structure comprises 532 residues: Berberine bridge enzyme-like 23 (532 aa).

Positions 1–22 (MRTLEAFALSLFLVFLVKWVNS) are cleaved as a signal peptide. A disulfide bond links C36 and C102. N78 is a glycosylation site (N-linked (GlcNAc...) asparagine). One can recognise an FAD-binding PCMH-type domain in the interval 80-256 (TSQKPILIVT…LSWKVKLVRV (177 aa)). A cross-link (6-(S-cysteinyl)-8alpha-(pros-histidyl)-FAD (His-Cys)) is located at residues 117–180 (HDYEGLSYLS…KIHGFPAGTC (64 aa)). N272 and N487 each carry an N-linked (GlcNAc...) asparagine glycan.

It belongs to the oxygen-dependent FAD-linked oxidoreductase family. FAD serves as cofactor. The FAD cofactor is bound via a bicovalent 6-S-cysteinyl, 8alpha-N1-histidyl FAD linkage. As to expression, accumulates in cell walls of etiolated hypocotyls.

It is found in the secreted. It localises to the cell wall. This chain is Berberine bridge enzyme-like 23, found in Arabidopsis thaliana (Mouse-ear cress).